The primary structure comprises 302 residues: Probable 2-(5''-triphosphoribosyl)-3'-dephosphocoenzyme-A synthase (302 aa).

It belongs to the CitG/MdcB family.

The catalysed reaction is 3'-dephospho-CoA + ATP = 2'-(5''-triphospho-alpha-D-ribosyl)-3'-dephospho-CoA + adenine. The polypeptide is Probable 2-(5''-triphosphoribosyl)-3'-dephosphocoenzyme-A synthase (Citrobacter koseri (strain ATCC BAA-895 / CDC 4225-83 / SGSC4696)).